A 92-amino-acid chain; its full sequence is MKTLLLTLVVVTIVCLDLGDSLICYMGPKTPRTCPPGENLCYTKTWCDAFCSIRGRRVDLGCAATCPTAKPGVDITCCSTDKCNPHPAHQSR.

The signal sequence occupies residues 1 to 21 (MKTLLLTLVVVTIVCLDLGDS). Disulfide bonds link Cys-24–Cys-41, Cys-34–Cys-62, Cys-47–Cys-51, Cys-66–Cys-77, and Cys-78–Cys-83.

Belongs to the three-finger toxin family. Long-chain subfamily. Type II alpha-neurotoxin sub-subfamily. Expressed by the venom gland.

The protein resides in the secreted. Functionally, binds with high affinity to muscular (alpha-1/CHRNA1) and neuronal (alpha-7/CHRNA7) nicotinic acetylcholine receptor (nAChR) and inhibits acetylcholine from binding to the receptor, thereby impairing neuromuscular and neuronal transmission. In Drysdalia coronoides (White-lipped snake), this protein is Long neurotoxin 77.